The primary structure comprises 510 residues: MTLWLPTSGKIYLPPTPPVARVQNTDEYVERTDIYYHAISDRLLTVGHPYFDVRSSDGAKIEVPKVSGNQFRAFRVTFPDPNKFALGDMTIHDPERYRLVWACKGLEIGRGQPLGVGTTGHPLFNKLHDTENPTERQEGTSDDRRNVSFDPKQVQMFIIGCIPCLGEYWDKAPVCEDAGSQVGLCPPLELKNGVIEDGDMFDIGFGNINNKTLSFNRSDVSLDIVNEICKYPDFLTMSNDVYGDSCFFCARREQCYARHNFVRGGLVGDAIPDDAVQQDHKYYLPAASQTALENSTYFPTVSGSLVTSDAQLFNRPFWLKRAQGHNNGILWNNQMFVTVADNTRNTNFSISVASDGTTVNYDAKKIREFMRHVEEYQLSFILQLCRIPLEAEVLTQINAMNHGILENWQLGFVPTPDNSVHDTYRYLQSKATKCPDAVPDTQKEDPFGQYTFWNVDMSEKLSLDLDQYPLGRKFLFQSGLQRARASARVSVKRSATRKTSKTVKRRKLTS.

Disordered regions lie at residues 126 to 147 and 488 to 510; these read KLHDTENPTERQEGTSDDRRNV and RVSVKRSATRKTSKTVKRRKLTS. Basic residues predominate over residues 490-510; that stretch reads SVKRSATRKTSKTVKRRKLTS.

Belongs to the papillomaviridae L1 protein family. In terms of assembly, self-assembles into homopentamers. The capsid has an icosahedral symmetry and consists of 72 capsomers, with each capsomer being a pentamer of L1. Interacts with the minor capsid protein L2; this interaction is necessary for viral genome encapsidation. Interacts with protein E2; this interaction enhances E2-dependent replication and transcription activation.

It localises to the virion. The protein resides in the host nucleus. Forms an icosahedral capsid with a T=7 symmetry and a 50 nm diameter. The capsid is composed of 72 pentamers linked to each other by disulfide bonds and associated with L2 proteins. Binds to heparan sulfate proteoglycans on cell surface of basal layer keratinocytes to provide initial virion attachment. This binding mediates a conformational change in the virus capsid that facilitates efficient infection. The virion enters the host cell via endocytosis. During virus trafficking, L1 protein dissociates from the viral DNA and the genomic DNA is released to the host nucleus. The virion assembly takes place within the cell nucleus. Encapsulates the genomic DNA together with protein L2. This Human papillomavirus 22 protein is Major capsid protein L1.